The following is a 371-amino-acid chain: Carbamoyl phosphate synthase small chain (371 aa).

The interval Met1–Val190 is CPSase. Positions 47, 237, and 239 each coordinate L-glutamine. A Glutamine amidotransferase type-1 domain is found at Leu189–Gly371. Cys264 functions as the Nucleophile in the catalytic mechanism. Residues Leu265, Gln268, Asn306, and Phe309 each contribute to the L-glutamine site. Catalysis depends on residues His348 and Glu350.

It belongs to the CarA family. Composed of two chains; the small (or glutamine) chain promotes the hydrolysis of glutamine to ammonia, which is used by the large (or ammonia) chain to synthesize carbamoyl phosphate. Tetramer of heterodimers (alpha,beta)4.

It carries out the reaction hydrogencarbonate + L-glutamine + 2 ATP + H2O = carbamoyl phosphate + L-glutamate + 2 ADP + phosphate + 2 H(+). It catalyses the reaction L-glutamine + H2O = L-glutamate + NH4(+). The protein operates within amino-acid biosynthesis; L-arginine biosynthesis; carbamoyl phosphate from bicarbonate: step 1/1. Its pathway is pyrimidine metabolism; UMP biosynthesis via de novo pathway; (S)-dihydroorotate from bicarbonate: step 1/3. In terms of biological role, small subunit of the glutamine-dependent carbamoyl phosphate synthetase (CPSase). CPSase catalyzes the formation of carbamoyl phosphate from the ammonia moiety of glutamine, carbonate, and phosphate donated by ATP, constituting the first step of 2 biosynthetic pathways, one leading to arginine and/or urea and the other to pyrimidine nucleotides. The small subunit (glutamine amidotransferase) binds and cleaves glutamine to supply the large subunit with the substrate ammonia. The chain is Carbamoyl phosphate synthase small chain from Aquifex aeolicus (strain VF5).